The sequence spans 259 residues: ATP synthase subunit b 2 (259 aa).

The helical transmembrane segment at 5–27 (WFTVSAQAINFLILVALLKRFLY) threads the bilayer.

The protein belongs to the ATPase B chain family. F-type ATPases have 2 components, F(1) - the catalytic core - and F(0) - the membrane proton channel. F(1) has five subunits: alpha(3), beta(3), gamma(1), delta(1), epsilon(1). F(0) has three main subunits: a(1), b(2) and c(10-14). The alpha and beta chains form an alternating ring which encloses part of the gamma chain. F(1) is attached to F(0) by a central stalk formed by the gamma and epsilon chains, while a peripheral stalk is formed by the delta and b chains.

It localises to the cell inner membrane. In terms of biological role, f(1)F(0) ATP synthase produces ATP from ADP in the presence of a proton or sodium gradient. F-type ATPases consist of two structural domains, F(1) containing the extramembraneous catalytic core and F(0) containing the membrane proton channel, linked together by a central stalk and a peripheral stalk. During catalysis, ATP synthesis in the catalytic domain of F(1) is coupled via a rotary mechanism of the central stalk subunits to proton translocation. Its function is as follows. Component of the F(0) channel, it forms part of the peripheral stalk, linking F(1) to F(0). In Syntrophotalea carbinolica (strain DSM 2380 / NBRC 103641 / GraBd1) (Pelobacter carbinolicus), this protein is ATP synthase subunit b 2.